The sequence spans 171 residues: Probable DNA-directed RNA polymerase subunit delta (171 aa).

Residues 14–81 (MALVEIAYEI…SDQTWGLRSW (68 aa)) enclose the HTH HARE-type domain. A disordered region spans residues 138–171 (EFDEIDEADDDELDDLEDEILDDDEDFDEEEDEE).

This sequence belongs to the RpoE family. RNAP is composed of a core of 2 alpha, a beta and a beta' subunits. The core is associated with a delta subunit and one of several sigma factors.

Participates in both the initiation and recycling phases of transcription. In the presence of the delta subunit, RNAP displays an increased specificity of transcription, a decreased affinity for nucleic acids, and an increased efficiency of RNA synthesis because of enhanced recycling. This Bacillus licheniformis (strain ATCC 14580 / DSM 13 / JCM 2505 / CCUG 7422 / NBRC 12200 / NCIMB 9375 / NCTC 10341 / NRRL NRS-1264 / Gibson 46) protein is Probable DNA-directed RNA polymerase subunit delta.